A 155-amino-acid chain; its full sequence is Ribonuclease H (155 aa).

Residues 1–142 (MLKQVEIFTD…CDELARAAAM (142 aa)) enclose the RNase H type-1 domain. Mg(2+) contacts are provided by Asp10, Glu48, Asp70, and Asp134.

The protein belongs to the RNase H family. In terms of assembly, monomer. The cofactor is Mg(2+).

Its subcellular location is the cytoplasm. The enzyme catalyses Endonucleolytic cleavage to 5'-phosphomonoester.. Endonuclease that specifically degrades the RNA of RNA-DNA hybrids. In Escherichia coli O127:H6 (strain E2348/69 / EPEC), this protein is Ribonuclease H.